A 259-amino-acid chain; its full sequence is Phosphatidylglycerol--prolipoprotein diacylglyceryl transferase (259 aa).

Helical transmembrane passes span 16-36 (LAIS…WFYA), 55-75 (FITY…VLLY), 92-112 (EGGM…YLFC), and 117-137 (INFL…LFLG). Arg-138 contacts a 1,2-diacyl-sn-glycero-3-phospho-(1'-sn-glycerol). A run of 3 helical transmembrane segments spans residues 172-192 (QLYE…YATF), 201-221 (GLNS…IEIF), and 228-248 (IGFI…MLLL).

Belongs to the Lgt family.

It is found in the cell inner membrane. It carries out the reaction L-cysteinyl-[prolipoprotein] + a 1,2-diacyl-sn-glycero-3-phospho-(1'-sn-glycerol) = an S-1,2-diacyl-sn-glyceryl-L-cysteinyl-[prolipoprotein] + sn-glycerol 1-phosphate + H(+). The protein operates within protein modification; lipoprotein biosynthesis (diacylglyceryl transfer). Catalyzes the transfer of the diacylglyceryl group from phosphatidylglycerol to the sulfhydryl group of the N-terminal cysteine of a prolipoprotein, the first step in the formation of mature lipoproteins. This is Phosphatidylglycerol--prolipoprotein diacylglyceryl transferase from Rickettsia rickettsii (strain Iowa).